The primary structure comprises 257 residues: Imidazole glycerol phosphate synthase subunit HisF (257 aa).

Residues aspartate 11 and aspartate 130 contribute to the active site.

The protein belongs to the HisA/HisF family. Heterodimer of HisH and HisF.

It is found in the cytoplasm. It catalyses the reaction 5-[(5-phospho-1-deoxy-D-ribulos-1-ylimino)methylamino]-1-(5-phospho-beta-D-ribosyl)imidazole-4-carboxamide + L-glutamine = D-erythro-1-(imidazol-4-yl)glycerol 3-phosphate + 5-amino-1-(5-phospho-beta-D-ribosyl)imidazole-4-carboxamide + L-glutamate + H(+). It participates in amino-acid biosynthesis; L-histidine biosynthesis; L-histidine from 5-phospho-alpha-D-ribose 1-diphosphate: step 5/9. IGPS catalyzes the conversion of PRFAR and glutamine to IGP, AICAR and glutamate. The HisF subunit catalyzes the cyclization activity that produces IGP and AICAR from PRFAR using the ammonia provided by the HisH subunit. In Shewanella denitrificans (strain OS217 / ATCC BAA-1090 / DSM 15013), this protein is Imidazole glycerol phosphate synthase subunit HisF.